A 142-amino-acid chain; its full sequence is Large ribosomal subunit protein uL16 (142 aa).

Residues 1–14 (MLSPRRTKFRKQQR) show a composition bias toward basic residues. Residues 1 to 22 (MLSPRRTKFRKQQRGRMTGKAT) form a disordered region.

The protein belongs to the universal ribosomal protein uL16 family. Part of the 50S ribosomal subunit.

Its function is as follows. Binds 23S rRNA and is also seen to make contacts with the A and possibly P site tRNAs. The chain is Large ribosomal subunit protein uL16 from Synechococcus elongatus (strain ATCC 33912 / PCC 7942 / FACHB-805) (Anacystis nidulans R2).